The sequence spans 79 residues: UPF0401 protein YkfF (79 aa).

The protein belongs to the UPF0401 family.

The sequence is that of UPF0401 protein YkfF (ykfF) from Escherichia coli (strain K12).